The primary structure comprises 288 residues: Hypersensitive-induced response protein-like protein 1 (288 aa).

The N-myristoyl glycine moiety is linked to residue Gly2.

Functionally, positive regulator of hypersensitive response (HR)-like cell death. May be involved in potassium ion channel regulation. This chain is Hypersensitive-induced response protein-like protein 1, found in Oryza sativa subsp. japonica (Rice).